The primary structure comprises 242 residues: Host range factor p28 (242 aa).

In terms of domain architecture, KilA-N spans 21–131 (YIDEPNDIRL…QSILRGLVNW (111 aa)). Residues 173–226 (CGICYEVVYSKRLENDRYFGLLDSCNHIFCITCINIWHRTRRETGASDNCPICR) form an RING-type zinc finger.

It belongs to the orthopoxvirus OPG021 family.

It is found in the host cytoplasm. The enzyme catalyses S-ubiquitinyl-[E2 ubiquitin-conjugating enzyme]-L-cysteine + [acceptor protein]-L-lysine = [E2 ubiquitin-conjugating enzyme]-L-cysteine + N(6)-ubiquitinyl-[acceptor protein]-L-lysine.. Its function is as follows. RING-finger E3 ubiquitin ligase which catalyzes the formation of both 'Lys-48'- and 'Lys-63'-linked polyubiquitin chains. Plays an important role in virulence by acting as an anti-apoptotic factor. The chain is Host range factor p28 (OPG021) from Cowpox virus (strain Brighton Red) (CPV).